The primary structure comprises 140 residues: Actin-depolymerizing factor 10 (140 aa).

S6 bears the Phosphoserine mark. Positions 7-139 constitute an ADF-H domain; that stretch reads GMHVSDECKL…SLDIIKGRVN (133 aa).

This sequence belongs to the actin-binding proteins ADF family.

It localises to the cytoplasm. It is found in the cytoskeleton. Functionally, actin-depolymerizing protein. Severs actin filaments (F-actin) and binds to actin monomers. This is Actin-depolymerizing factor 10 (ADF10) from Arabidopsis thaliana (Mouse-ear cress).